Consider the following 88-residue polypeptide: MLVTDKKQEIITSFKRHDSDTGSPEVQIAILTERIIYLTEHFKVHKKDHHSRRGLLKIVGQRRRLLDYLKKKDVERYRAIIEKLGIRR.

It belongs to the universal ribosomal protein uS15 family. As to quaternary structure, part of the 30S ribosomal subunit. Forms a bridge to the 50S subunit in the 70S ribosome, contacting the 23S rRNA.

One of the primary rRNA binding proteins, it binds directly to 16S rRNA where it helps nucleate assembly of the platform of the 30S subunit by binding and bridging several RNA helices of the 16S rRNA. In terms of biological role, forms an intersubunit bridge (bridge B4) with the 23S rRNA of the 50S subunit in the ribosome. This is Small ribosomal subunit protein uS15 from Geobacter metallireducens (strain ATCC 53774 / DSM 7210 / GS-15).